The primary structure comprises 98 residues: Hainantoxin-XVII.3 (98 aa).

The signal sequence occupies residues 1-40; sequence MTTVGVSLFRRSPEKITMKIATFLGLSFLLIASYFLICEA. The propeptide occupies 41-64; that stretch reads QHPGFQELLILEENMRDPENSKER. 3 cysteine pairs are disulfide-bonded: C66/C81, C73/C85, and C80/C95.

Belongs to the hainantoxin family. 17 subfamily. Expressed by the venom gland.

Its subcellular location is the secreted. In terms of biological role, inhibits with low potency Kv1.2/KCNA2 and Kv1.3/KCNA3 voltage-gated potassium channels. The sequence is that of Hainantoxin-XVII.3 from Cyriopagopus hainanus (Chinese bird spider).